The primary structure comprises 146 residues: Bifunctional adenosine 5'-phosphosulfate phosphorylase/adenylylsulfatase HINT4 (146 aa).

In terms of domain architecture, HIT spans 9-120; it reads IFCEIVRNPT…YVPRWKAIKY (112 aa). Positions 101 to 105 match the Histidine triad motif motif; that stretch reads HLHLH. The active-site Tele-AMP-histidine intermediate is His105.

In terms of assembly, homodimer.

The protein resides in the peroxisome. The enzyme catalyses sulfate + ADP + H(+) = adenosine 5'-phosphosulfate + phosphate. The catalysed reaction is adenosine 5'-phosphosulfate + H2O = sulfate + AMP + 2 H(+). Its activity is regulated as follows. The adenosine 5'-phosphosulfate phosphorylase activity is enhanced at low pH. Functionally, possesses adenylylsulfatase activity in vitro, releasing AMP and sulfate from adenylyl sulfate. Also possesses adenosine 5'-phosphosulfate (APS) phosphorylase activity in vitro. Catalyzes the phosphorolysis of APS, leading to ADP and sulfate. The protein is Bifunctional adenosine 5'-phosphosulfate phosphorylase/adenylylsulfatase HINT4 of Arabidopsis thaliana (Mouse-ear cress).